The primary structure comprises 430 residues: Pyrroloquinoline quinone-dependent sugar dehydrogenase (430 aa).

A signal peptide spans 1–23 (MARLAPHTLLLALFVFLFGSCTA). N-linked (GlcNAc...) asparagine glycosylation is present at asparagine 25. Position 57 (arginine 57) interacts with pyrroloquinoline quinone. N-linked (GlcNAc...) asparagine glycans are attached at residues asparagine 94 and asparagine 147. Residue histidine 153 participates in pyrroloquinoline quinone binding. A glycan (N-linked (GlcNAc...) asparagine) is linked at asparagine 184. Pyrroloquinoline quinone is bound at residue arginine 220. Ca(2+) contacts are provided by serine 240 and aspartate 242. An intrachain disulfide couples cysteine 281 to cysteine 316. A glycan (N-linked (GlcNAc...) asparagine) is linked at asparagine 306. Histidine 330 lines the pyrroloquinoline quinone pocket. An N-linked (GlcNAc...) asparagine glycan is attached at asparagine 341. Histidine 350 provides a ligand contact to pyrroloquinoline quinone. A disulfide bridge connects residues cysteine 388 and cysteine 392.

It belongs to the sugar dehydrogenase AA12 family. Ca(2+) serves as cofactor. It depends on pyrroloquinoline quinone as a cofactor.

The protein resides in the secreted. Its function is as follows. Pyrroloquinoline quinone (PPQ)-dependent oxidoreductase that catalyzes the oxidation of various sugars such as L-fucose. The chain is Pyrroloquinoline quinone-dependent sugar dehydrogenase from Hypocrea jecorina (strain QM6a) (Trichoderma reesei).